We begin with the raw amino-acid sequence, 318 residues long: NAC domain-containing protein 68 (318 aa).

The 155-residue stretch at 21–175 (LPPGFRFHPT…EWVLCRLYNK (155 aa)) folds into the NAC domain.

Expressed in stems, leaf blades and callus. Weakly expressed in developing flowers.

The protein localises to the nucleus. In terms of biological role, probable transcription factor involved in stress response. The polypeptide is NAC domain-containing protein 68 (Oryza sativa subsp. japonica (Rice)).